The chain runs to 179 residues: Large ribosomal subunit protein uL5 (179 aa).

This sequence belongs to the universal ribosomal protein uL5 family. As to quaternary structure, part of the 50S ribosomal subunit; part of the 5S rRNA/L5/L18/L25 subcomplex. Contacts the 5S rRNA and the P site tRNA. Forms a bridge to the 30S subunit in the 70S ribosome.

In terms of biological role, this is one of the proteins that bind and probably mediate the attachment of the 5S RNA into the large ribosomal subunit, where it forms part of the central protuberance. In the 70S ribosome it contacts protein S13 of the 30S subunit (bridge B1b), connecting the 2 subunits; this bridge is implicated in subunit movement. Contacts the P site tRNA; the 5S rRNA and some of its associated proteins might help stabilize positioning of ribosome-bound tRNAs. This is Large ribosomal subunit protein uL5 from Citrifermentans bemidjiense (strain ATCC BAA-1014 / DSM 16622 / JCM 12645 / Bem) (Geobacter bemidjiensis).